A 346-amino-acid chain; its full sequence is D-alanine--D-alanine ligase (346 aa).

Residues 125-325 form the ATP-grasp domain; sequence KRIWRSEGLP…YPALCLEVLR (201 aa). 151–206 serves as a coordination point for ATP; the sequence is FAALGSPMIVKPDREGSTIGLTKVTQIEQCGAAYALAARHDAMVLCEQFVKGDEVT. Positions 278, 292, and 294 each coordinate Mg(2+).

The protein belongs to the D-alanine--D-alanine ligase family. Mg(2+) is required as a cofactor. The cofactor is Mn(2+).

The protein localises to the cytoplasm. The catalysed reaction is 2 D-alanine + ATP = D-alanyl-D-alanine + ADP + phosphate + H(+). The protein operates within cell wall biogenesis; peptidoglycan biosynthesis. Cell wall formation. This is D-alanine--D-alanine ligase from Albidiferax ferrireducens (strain ATCC BAA-621 / DSM 15236 / T118) (Rhodoferax ferrireducens).